We begin with the raw amino-acid sequence, 275 residues long: 4-hydroxy-tetrahydrodipicolinate reductase (275 aa).

Residues 13–18 and 108–110 each bind NAD(+); these read GAGGKM and GTT. Histidine 164 acts as the Proton donor/acceptor in catalysis. Histidine 165 is a binding site for (S)-2,3,4,5-tetrahydrodipicolinate. Lysine 168 (proton donor) is an active-site residue. 174–175 provides a ligand contact to (S)-2,3,4,5-tetrahydrodipicolinate; the sequence is GT.

This sequence belongs to the DapB family.

It localises to the cytoplasm. It catalyses the reaction (S)-2,3,4,5-tetrahydrodipicolinate + NAD(+) + H2O = (2S,4S)-4-hydroxy-2,3,4,5-tetrahydrodipicolinate + NADH + H(+). The enzyme catalyses (S)-2,3,4,5-tetrahydrodipicolinate + NADP(+) + H2O = (2S,4S)-4-hydroxy-2,3,4,5-tetrahydrodipicolinate + NADPH + H(+). It functions in the pathway amino-acid biosynthesis; L-lysine biosynthesis via DAP pathway; (S)-tetrahydrodipicolinate from L-aspartate: step 4/4. In terms of biological role, catalyzes the conversion of 4-hydroxy-tetrahydrodipicolinate (HTPA) to tetrahydrodipicolinate. In Picosynechococcus sp. (strain ATCC 27264 / PCC 7002 / PR-6) (Agmenellum quadruplicatum), this protein is 4-hydroxy-tetrahydrodipicolinate reductase.